Consider the following 93-residue polypeptide: Alpha-defensin 22 (93 aa).

The signal sequence occupies residues 1–19; it reads MKKLVLLSALVLLAYQVQT. Residues 20–58 constitute a propeptide that is removed on maturation; it reads DPIQNTDEETNTEEQPGEEDQAVSVSFGGQEGSALHEKL. Residues 22-41 form a disordered region; that stretch reads IQNTDEETNTEEQPGEEDQA. Over residues 25 to 40 the composition is skewed to acidic residues; it reads TDEETNTEEQPGEEDQ. 3 cysteine pairs are disulfide-bonded: Cys-64–Cys-89, Cys-66–Cys-81, and Cys-71–Cys-88.

It belongs to the alpha-defensin family.

It is found in the secreted. Its function is as follows. May have microbicidal activities. This chain is Alpha-defensin 22 (Defa22), found in Mus musculus (Mouse).